The chain runs to 637 residues: Threonine--tRNA ligase (637 aa).

Positions 1 to 61 (MPVITLPDGS…DKDAELAIVT (61 aa)) constitute a TGS domain. The tract at residues 242–533 (DHRKIGKKLG…LIEHYEGAFP (292 aa)) is catalytic. 3 residues coordinate Zn(2+): cysteine 333, histidine 384, and histidine 510.

Belongs to the class-II aminoacyl-tRNA synthetase family. As to quaternary structure, homodimer. The cofactor is Zn(2+).

It is found in the cytoplasm. The catalysed reaction is tRNA(Thr) + L-threonine + ATP = L-threonyl-tRNA(Thr) + AMP + diphosphate + H(+). Its function is as follows. Catalyzes the attachment of threonine to tRNA(Thr) in a two-step reaction: L-threonine is first activated by ATP to form Thr-AMP and then transferred to the acceptor end of tRNA(Thr). Also edits incorrectly charged L-seryl-tRNA(Thr). The protein is Threonine--tRNA ligase of Hahella chejuensis (strain KCTC 2396).